Here is a 158-residue protein sequence, read N- to C-terminus: SsrA-binding protein (158 aa).

The interval 132-158 (KKTHDKRETEKKRDWNREKARLMRDKG) is disordered. Over residues 136-158 (DKRETEKKRDWNREKARLMRDKG) the composition is skewed to basic and acidic residues.

The protein belongs to the SmpB family.

It localises to the cytoplasm. Functionally, required for rescue of stalled ribosomes mediated by trans-translation. Binds to transfer-messenger RNA (tmRNA), required for stable association of tmRNA with ribosomes. tmRNA and SmpB together mimic tRNA shape, replacing the anticodon stem-loop with SmpB. tmRNA is encoded by the ssrA gene; the 2 termini fold to resemble tRNA(Ala) and it encodes a 'tag peptide', a short internal open reading frame. During trans-translation Ala-aminoacylated tmRNA acts like a tRNA, entering the A-site of stalled ribosomes, displacing the stalled mRNA. The ribosome then switches to translate the ORF on the tmRNA; the nascent peptide is terminated with the 'tag peptide' encoded by the tmRNA and targeted for degradation. The ribosome is freed to recommence translation, which seems to be the essential function of trans-translation. This Brucella anthropi (strain ATCC 49188 / DSM 6882 / CCUG 24695 / JCM 21032 / LMG 3331 / NBRC 15819 / NCTC 12168 / Alc 37) (Ochrobactrum anthropi) protein is SsrA-binding protein.